The following is a 151-amino-acid chain: Small ribosomal subunit protein uS15y (151 aa).

The protein belongs to the universal ribosomal protein uS15 family.

This chain is Small ribosomal subunit protein uS15y (RPS13B), found in Arabidopsis thaliana (Mouse-ear cress).